Consider the following 511-residue polypeptide: 2-isopropylmalate synthase (511 aa).

The 263-residue stretch at 4–266 folds into the Pyruvate carboxyltransferase domain; that stretch reads IDIFDTTLRD…ETGIQLQEIK (263 aa). 4 residues coordinate Mn(2+): Asp13, His201, His203, and Asn237. A regulatory domain region spans residues 392–511; it reads ELKMVQVQYG…IKESLRAHPV (120 aa).

It belongs to the alpha-IPM synthase/homocitrate synthase family. LeuA type 1 subfamily. In terms of assembly, homodimer. It depends on Mn(2+) as a cofactor.

It localises to the cytoplasm. It carries out the reaction 3-methyl-2-oxobutanoate + acetyl-CoA + H2O = (2S)-2-isopropylmalate + CoA + H(+). Its pathway is amino-acid biosynthesis; L-leucine biosynthesis; L-leucine from 3-methyl-2-oxobutanoate: step 1/4. Its function is as follows. Catalyzes the condensation of the acetyl group of acetyl-CoA with 3-methyl-2-oxobutanoate (2-ketoisovalerate) to form 3-carboxy-3-hydroxy-4-methylpentanoate (2-isopropylmalate). This Lysinibacillus sphaericus (strain C3-41) protein is 2-isopropylmalate synthase.